The chain runs to 504 residues: Maturase K (504 aa).

This sequence belongs to the intron maturase 2 family. MatK subfamily.

Its subcellular location is the plastid. The protein resides in the chloroplast. Its function is as follows. Usually encoded in the trnK tRNA gene intron. Probably assists in splicing its own and other chloroplast group II introns. In Cucumis sativus (Cucumber), this protein is Maturase K.